The sequence spans 296 residues: Methylsterol monooxygenase 1 (296 aa).

Transmembrane regions (helical) follow at residues 55–75 (LLVHEASYFLLCVPGFIFQFI) and 100–120 (TLIFNHFFIQLPLICGTYYFT). The Fatty acid hydroxylase domain maps to 145-274 (CAVIEDAWHY…FTWWDRIFGT (130 aa)). Positions 157 to 161 (HRLLH) match the Histidine box-1 motif. The Histidine box-2 signature appears at 170–174 (HKVHH). The chain crosses the membrane as a helical span at residues 199–219 (FFIGIVVFCNHVVLLWAWVIC). Residues 249 to 255 (FHDFHHM) carry the Histidine box-3 motif.

It belongs to the sterol desaturase family. It depends on Fe cation as a cofactor.

Its subcellular location is the endoplasmic reticulum membrane. It carries out the reaction 4,4-dimethyl-5alpha-cholest-7-en-3beta-ol + 6 Fe(II)-[cytochrome b5] + 3 O2 + 5 H(+) = 4alpha-carboxy-4beta-methyl-5alpha-cholest-7-ene-3beta-ol + 6 Fe(III)-[cytochrome b5] + 4 H2O. It functions in the pathway steroid biosynthesis; zymosterol biosynthesis; zymosterol from lanosterol: step 3/6. Its function is as follows. Catalyzes the first step in the removal of the two C-4 methyl groups of 4,4-dimethylzymosterol. The protein is Methylsterol monooxygenase 1 (MSMO1) of Gallus gallus (Chicken).